Consider the following 513-residue polypeptide: EGF-like domain-containing protein 1 (513 aa).

A signal peptide spans 1–21 (MMHTFLRRLCVVALCLGYIKA). The EGF-like domain occupies 72 to 108 (PTALCGPPCLNGGECYEPTVGTYMCMCPEAFYGNKCE). Intrachain disulfides connect Cys76/Cys86, Cys80/Cys96, and Cys98/Cys107. The ZP domain occupies 115 to 364 (ECSGTEITIN…TSCDSVVCPS (250 aa)). The tract at residues 356 to 411 (SCDSVVCPSPPQSVPSNPQNIPPANPQNIPPANPQNIPPANPQISPSSSQRKRRAA) is disordered. The span at 375–396 (NIPPANPQNIPPANPQNIPPAN) shows a compositional bias: pro residues. Residues Asn438 and Asn503 are each glycosylated (N-linked (GlcNAc...) asparagine).

Component of the acid-insoluble organic matrix of calcified layers of the shell (at protein level).

The protein localises to the secreted. The polypeptide is EGF-like domain-containing protein 1 (Lottia gigantea (Giant owl limpet)).